We begin with the raw amino-acid sequence, 200 residues long: NADH-quinone oxidoreductase subunit C (200 aa).

Belongs to the complex I 30 kDa subunit family. In terms of assembly, NDH-1 is composed of 14 different subunits. Subunits NuoB, C, D, E, F, and G constitute the peripheral sector of the complex.

The protein localises to the cell inner membrane. It carries out the reaction a quinone + NADH + 5 H(+)(in) = a quinol + NAD(+) + 4 H(+)(out). In terms of biological role, NDH-1 shuttles electrons from NADH, via FMN and iron-sulfur (Fe-S) centers, to quinones in the respiratory chain. The immediate electron acceptor for the enzyme in this species is believed to be ubiquinone. Couples the redox reaction to proton translocation (for every two electrons transferred, four hydrogen ions are translocated across the cytoplasmic membrane), and thus conserves the redox energy in a proton gradient. The chain is NADH-quinone oxidoreductase subunit C from Agrobacterium fabrum (strain C58 / ATCC 33970) (Agrobacterium tumefaciens (strain C58)).